We begin with the raw amino-acid sequence, 1498 residues long: Rap guanine nucleotide exchange factor 2 (1498 aa).

Disordered regions lie at residues 40-59 (HVSS…SSSL) and 68-101 (SEAG…SDPL). Acidic residues predominate over residues 83–94 (VDSEDDDDEEDI). A nucleoside 3',5'-cyclic phosphate is bound at residue 135–252 (AFANMTMSVR…QKVEEEGEIV (118 aa)). The region spanning 267–380 (KGHIVIKGTS…RLLNIACAAK (114 aa)) is the N-terminal Ras-GEF domain. The PDZ domain maps to 385–468 (LMTLTKPSRE…LSITVKTNLF (84 aa)). Position 501 is a phosphoserine (serine 501). The Ras-associating domain occupies 606 to 692 (PDQVLRVFKA…GRYYLKNNME (87 aa)). Threonine 644 carries the phosphothreonine modification. A Ras-GEF domain is found at 717-944 (STVEVATQLS…SQGSTNATVL (228 aa)). Phosphoserine is present on residues serine 806, serine 930, serine 933, serine 1022, serine 1079, serine 1088, serine 1094, serine 1115, serine 1119, serine 1158, and serine 1175. The disordered stretch occupies residues 1002–1048 (PATNTLPKNPGDKKPVKSETSPVAPRAGSQQKAQAQPPPPQPQPQHK). Positions 1094–1159 (SLERHKKQAE…RSSIVSNSSF (66 aa)) are disordered. Composition is skewed to low complexity over residues 1110 to 1124 (SSQL…QSSP) and 1140 to 1159 (SDSG…NSSF). Disordered regions lie at residues 1224–1257 (STEE…GSHD), 1304–1371 (TKYN…TKPV), and 1392–1498 (EGRY…VSAV). Composition is skewed to polar residues over residues 1246 to 1257 (GSWTSCSSGSHD) and 1306 to 1330 (YNRQ…SSTG). The segment covering 1354-1365 (EAESSSVTSVTT) has biased composition (low complexity). The segment covering 1487-1498 (TEEDEDEQVSAV) has biased composition (acidic residues).

The protein belongs to the RAPGEF2 family. In terms of assembly, found in a complex, at least composed of KIDINS220, MAGI2, NTRK1 and RAPGEF2; the complex is mainly formed at late endosomes in a neuronal growth factor (NGF)-dependent manner. Interacts (via C-terminal domain) with NEDD4 (via WW domains); this interaction leads to ubiquitination and degradation via the proteasome pathway in a cAMP-independent manner. Interacts with MAGI1 (via PDZ domain). Interacts with ADRB1 (via C-terminal PDZ motif); the interaction is direct. Interacts (via Ras-associating domain) with RAP1A (via GTP-bound active form). Interacts weakly with HRAS (via GDP- and GTP-bound forms). Interacts (via C-terminal domain) with MAGI2 (via PDZ and WW domains). Interacts with CDH1, CTNNB1 and TJP1. In terms of processing, ubiquitinated by NEDD4, leading to proteasomal degradation. Post-translationally, phosphorylation by PLK2 promotes its activity.

The protein resides in the cell junction. The protein localises to the cytoplasm. It localises to the perinuclear region. It is found in the cell membrane. Its subcellular location is the late endosome. In terms of biological role, functions as a guanine nucleotide exchange factor (GEF), which activates Rap and Ras family of small GTPases by exchanging bound GDP for free GTP in a cAMP-dependent manner. Serves as a link between cell surface receptors and Rap/Ras GTPases in intracellular signaling cascades. Also acts as an effector for Rap1 by direct association with Rap1-GTP thereby leading to the amplification of Rap1-mediated signaling. Shows weak activity on HRAS. It is controversial whether RAPGEF2 binds cAMP and cGMP or not. Its binding to ligand-activated beta-1 adrenergic receptor ADRB1 leads to the Ras activation through the G(s)-alpha signaling pathway. Involved in the cAMP-induced Ras and Erk1/2 signaling pathway that leads to sustained inhibition of long term melanogenesis by reducing dendrite extension and melanin synthesis. Also provides inhibitory signals for cell proliferation of melanoma cells and promotes their apoptosis in a cAMP-independent nanner. Regulates cAMP-induced neuritogenesis by mediating the Rap1/B-Raf/ERK signaling through a pathway that is independent on both PKA and RAPGEF3/RAPGEF4. Involved in neuron migration and in the formation of the major forebrain fiber connections forming the corpus callosum, the anterior commissure and the hippocampal commissure during brain development. Involved in neuronal growth factor (NGF)-induced sustained activation of Rap1 at late endosomes and in brain-derived neurotrophic factor (BDNF)-induced axon outgrowth of hippocampal neurons. Plays a role in the regulation of embryonic blood vessel formation and in the establishment of basal junction integrity and endothelial barrier function. May be involved in the regulation of the vascular endothelial growth factor receptor KDR and cadherin CDH5 expression at allantois endothelial cell-cell junctions. The polypeptide is Rap guanine nucleotide exchange factor 2 (RAPGEF2) (Canis lupus familiaris (Dog)).